Reading from the N-terminus, the 324-residue chain is Putative S-adenosyl-L-methionine-dependent methyltransferase MUL_0818 (324 aa).

Residues aspartate 138 and aspartate 167 to leucine 168 each bind S-adenosyl-L-methionine.

The protein belongs to the UPF0677 family.

Its function is as follows. Exhibits S-adenosyl-L-methionine-dependent methyltransferase activity. In Mycobacterium ulcerans (strain Agy99), this protein is Putative S-adenosyl-L-methionine-dependent methyltransferase MUL_0818.